Reading from the N-terminus, the 338-residue chain is Galaxin (338 aa).

The first 23 residues, 1 to 23 (MKPSGAFLSLCVVLLSLATHCFS), serve as a signal peptide directing secretion. Over residues 30-47 (RRDAHSDTNALKSRDRRQ) the composition is skewed to basic and acidic residues. Residues 30–50 (RRDAHSDTNALKSRDRRQAPA) are disordered.

In terms of tissue distribution, component of the acid-insoluble organic matrix of the aragonitic skeleton (at protein level). Initially, expressed in an aboral submarginal ring and then along calcifying septa.

It localises to the secreted. The sequence is that of Galaxin from Acropora millepora (Staghorn coral).